The sequence spans 302 residues: tRNA pseudouridine synthase B (302 aa).

Residue His-40 coordinates substrate. Asp-45 functions as the Nucleophile in the catalytic mechanism. Residues Tyr-73, Tyr-178, and Leu-199 each coordinate substrate.

This sequence belongs to the pseudouridine synthase TruB family. Type 1 subfamily.

The enzyme catalyses uridine(55) in tRNA = pseudouridine(55) in tRNA. Its function is as follows. Responsible for synthesis of pseudouridine from uracil-55 in the psi GC loop of transfer RNAs. This chain is tRNA pseudouridine synthase B, found in Buchnera aphidicola subsp. Baizongia pistaciae (strain Bp).